The chain runs to 254 residues: 5-keto-D-gluconate 5-reductase (254 aa).

Residue 13-37 (LITGSAQGIGFLLATGLGKYGAQII) participates in NADP(+) binding. Ser145 provides a ligand contact to substrate. The Proton acceptor role is filled by Tyr158.

Belongs to the short-chain dehydrogenases/reductases (SDR) family.

The enzyme catalyses D-gluconate + NAD(+) = 5-dehydro-D-gluconate + NADH + H(+). The catalysed reaction is D-gluconate + NADP(+) = 5-dehydro-D-gluconate + NADPH + H(+). The protein operates within carbohydrate acid metabolism; L-idonate degradation. In terms of biological role, catalyzes the reduction of 5-keto-D-gluconate to D-gluconate, using either NADH or NADPH. Is likely involved in an L-idonate degradation pathway that allows E.coli to utilize L-idonate as the sole carbon and energy source. Is also able to catalyze the reverse reaction in vitro, but the D-gluconate oxidation by the enzyme can only proceed with NAD. The polypeptide is 5-keto-D-gluconate 5-reductase (Escherichia coli O6:H1 (strain CFT073 / ATCC 700928 / UPEC)).